The following is a 114-amino-acid chain: Ribonuclease P protein component (114 aa).

This sequence belongs to the RnpA family. In terms of assembly, consists of a catalytic RNA component (M1 or rnpB) and a protein subunit.

It carries out the reaction Endonucleolytic cleavage of RNA, removing 5'-extranucleotides from tRNA precursor.. RNaseP catalyzes the removal of the 5'-leader sequence from pre-tRNA to produce the mature 5'-terminus. It can also cleave other RNA substrates such as 4.5S RNA. The protein component plays an auxiliary but essential role in vivo by binding to the 5'-leader sequence and broadening the substrate specificity of the ribozyme. This is Ribonuclease P protein component from Legionella pneumophila (strain Paris).